A 317-amino-acid chain; its full sequence is Olfactory receptor 8B3 (317 aa).

At Met-1–Tyr-32 the chain is on the extracellular side. Asn-8 carries N-linked (GlcNAc...) asparagine glycosylation. A helical membrane pass occupies residues Leu-33 to Gly-53. The Cytoplasmic segment spans residues Leu-54 to His-59. A helical transmembrane segment spans residues Thr-60–Phe-80. The Extracellular portion of the chain corresponds to Ser-81 to Tyr-97. A helical membrane pass occupies residues Ala-98–Leu-118. The Cytoplasmic segment spans residues Thr-119–Lys-136. A helical membrane pass occupies residues Val-137–Ala-157. Residues Gly-158 to Glu-199 lie on the Extracellular side of the membrane. The chain crosses the membrane as a helical span at residues Val-200–Ser-220. At Tyr-221 to Ser-242 the chain is on the cytoplasmic side. The helical transmembrane segment at Thr-243–Leu-263 threads the bilayer. At Lys-264 to Lys-274 the chain is on the extracellular side. Residues Ile-275–Leu-294 traverse the membrane as a helical segment. Topologically, residues Arg-295 to Asn-317 are cytoplasmic.

The protein belongs to the G-protein coupled receptor 1 family.

It is found in the cell membrane. In terms of biological role, odorant receptor. The protein is Olfactory receptor 8B3 of Mus musculus (Mouse).